Here is a 451-residue protein sequence, read N- to C-terminus: Medium-chain fatty acid ethyl ester synthase/esterase 2 (451 aa).

Lys114 participates in a covalent cross-link: Glycyl lysine isopeptide (Lys-Gly) (interchain with G-Cter in ubiquitin). The region spanning 166 to 430 (PLVVILHGLA…GGHLAYLDKD (265 aa)) is the AB hydrolase-1 domain. Active-site charge relay system residues include Ser247, Asp395, and His423.

Belongs to the AB hydrolase superfamily. AB hydrolase 4 family.

The catalysed reaction is an aliphatic alcohol + acetyl-CoA = an acetyl ester + CoA. In terms of biological role, displays enzymatic activity both for medium-chain fatty acid (MCFA) ethyl ester synthesis and hydrolysis (esterase activity). MCFA are toxic for yeast and this enzyme could thus be involved in their detoxification by esterification. The protein is Medium-chain fatty acid ethyl ester synthase/esterase 2 (EHT1) of Saccharomyces cerevisiae (strain ATCC 204508 / S288c) (Baker's yeast).